The chain runs to 396 residues: Gap junction gamma-1 protein (396 aa).

At 1 to 22 (MSWSFLTRLLEEIHNHSTFVGK) the chain is on the cytoplasmic side. The helical transmembrane segment at 23–45 (IWLTVLIVFRIVLTAVGGESIYY) threads the bilayer. At 46-75 (DEQSKFVCNTEQPGCENVCYDAFAPLSHVR) the chain is on the extracellular side. The helical transmembrane segment at 76 to 95 (FWVFQIILVATPSVMYLGYA) threads the bilayer. Residues 96–175 (IHKIAKMEHG…RRIREDGLMK (80 aa)) are Cytoplasmic-facing. A disordered region spans residues 145-165 (ELESEKENKEQNQSKPKHDGR). Residues 147-156 (ESEKENKEQN) are compositionally biased toward basic and acidic residues. The chain crosses the membrane as a helical span at residues 176–198 (IYVLQLLARTMFEVGFLIGQYFL). Topologically, residues 199 to 228 (YGFQVHPFYVCSRVPCPHKIDCFISRPTEK) are extracellular. A helical transmembrane segment spans residues 229-248 (TIFLLIMYGVTGLCLLLNIW). Topologically, residues 249 to 396 (EMLHLGFGTI…SGDGKTSVWI (148 aa)) are cytoplasmic. Residues 357–396 (NHQNNPHGPREKKAKVGSKAGSNKSSASSKSGDGKTSVWI) form a disordered region. Over residues 373–396 (GSKAGSNKSSASSKSGDGKTSVWI) the composition is skewed to low complexity.

Belongs to the connexin family. Gamma-type subfamily. A connexon is composed of a hexamer of connexins. Interacts with CNST.

Its subcellular location is the cell membrane. The protein resides in the cell junction. It localises to the gap junction. Its function is as follows. One gap junction consists of a cluster of closely packed pairs of transmembrane channels, the connexons, through which materials of low MW diffuse from one cell to a neighboring cell. This Sus scrofa (Pig) protein is Gap junction gamma-1 protein (GJC1).